A 328-amino-acid polypeptide reads, in one-letter code: Dof zinc finger protein PBF (328 aa).

Residues 33–56 (RDPKQTRAMPQIGGSGERKPRPQL) are disordered. A Dof-type zinc finger spans residues 60–114 (LKCPRCDSNNTKFCYYNNYSMSQPRYFCKACRRYWTHGGTLRNVPIGGGCRKNKH). Residues cysteine 62, cysteine 65, cysteine 87, and cysteine 90 each coordinate Zn(2+). 2 disordered regions span residues 124-144 (TSSSSSATYAPLSPSTNASSS) and 306-328 (WNKHNNNNNNNNNNNNNNNNKGQ).

Interacts with the bZIP transcription factor Opaque-2/O2. Seed endosperm.

It localises to the nucleus. In terms of biological role, transcription factor that binds specifically to a 5'-AA[AG]G-3' consensus core sequence. May enhance the DNA binding of the bZIP transcription factor Opaque-2 to O2 binding site elements. The sequence is that of Dof zinc finger protein PBF (PBF) from Zea mays (Maize).